The primary structure comprises 395 residues: S-adenosylmethionine synthase (395 aa).

His16 contacts ATP. Residue Asp18 participates in Mg(2+) binding. Position 44 (Glu44) interacts with K(+). Glu57 and Gln100 together coordinate L-methionine. The segment at 100–110 (QSPDIAQGVDR) is flexible loop. ATP contacts are provided by residues 167-169 (DAK), 233-234 (RF), Asp242, 248-249 (RK), Ala265, and Lys269. Asp242 provides a ligand contact to L-methionine. Residue Lys273 participates in L-methionine binding.

This sequence belongs to the AdoMet synthase family. As to quaternary structure, homotetramer; dimer of dimers. Requires Mg(2+) as cofactor. K(+) serves as cofactor.

The protein localises to the cytoplasm. The enzyme catalyses L-methionine + ATP + H2O = S-adenosyl-L-methionine + phosphate + diphosphate. It functions in the pathway amino-acid biosynthesis; S-adenosyl-L-methionine biosynthesis; S-adenosyl-L-methionine from L-methionine: step 1/1. In terms of biological role, catalyzes the formation of S-adenosylmethionine (AdoMet) from methionine and ATP. The overall synthetic reaction is composed of two sequential steps, AdoMet formation and the subsequent tripolyphosphate hydrolysis which occurs prior to release of AdoMet from the enzyme. The protein is S-adenosylmethionine synthase of Burkholderia cenocepacia (strain ATCC BAA-245 / DSM 16553 / LMG 16656 / NCTC 13227 / J2315 / CF5610) (Burkholderia cepacia (strain J2315)).